The primary structure comprises 186 residues: Probable RNA 2'-phosphotransferase (186 aa).

The protein belongs to the KptA/TPT1 family.

In terms of biological role, removes the 2'-phosphate from RNA via an intermediate in which the phosphate is ADP-ribosylated by NAD followed by a presumed transesterification to release the RNA and generate ADP-ribose 1''-2''-cyclic phosphate (APPR&gt;P). May function as an ADP-ribosylase. The sequence is that of Probable RNA 2'-phosphotransferase from Agrobacterium fabrum (strain C58 / ATCC 33970) (Agrobacterium tumefaciens (strain C58)).